Here is a 321-residue protein sequence, read N- to C-terminus: Olfactory receptor 51V1 (321 aa).

Residues 1–34 are Extracellular-facing; it reads MFLSSRMITSVSPSTSTNSSFLLTGFSGMEQQYP. Asn-18 carries N-linked (GlcNAc...) asparagine glycosylation. Residues 35-55 traverse the membrane as a helical segment; that stretch reads WLSIPFSSIYAMVLLGNCMVL. The Cytoplasmic portion of the chain corresponds to 56–63; it reads HVIWTEPS. A helical transmembrane segment spans residues 64–84; the sequence is LHQPMFYFLSMLALTDLCMGL. Residues 85–108 lie on the Extracellular side of the membrane; it reads STVYTVLGILWGIIREISLDSCIA. The cysteines at positions 106 and 188 are disulfide-linked. Residues 109-129 traverse the membrane as a helical segment; that stretch reads QSYFIHGLSFMESSVLLTMAF. The Cytoplasmic portion of the chain corresponds to 130 to 148; the sequence is DRYIAICNPLRYSSILTNS. Residues 149–169 traverse the membrane as a helical segment; the sequence is RIIKIGLTIIGRSFFFITPPI. The Extracellular segment spans residues 170–205; that stretch reads ICLKFFNYCHFHILSHSFCLHQDLLRLACSDIRFNS. A helical transmembrane segment spans residues 206–226; the sequence is YYALMLVICILLLDAILILFS. The Cytoplasmic portion of the chain corresponds to 227 to 246; the sequence is YILILKSVLAVASQEERHKL. Residues 247–267 traverse the membrane as a helical segment; sequence FQTCISHICAVLVFYIPIISL. Over 268-282 the chain is Extracellular; the sequence is TMVHRFGKHLSPVAH. The chain crosses the membrane as a helical span at residues 283–303; it reads VLIGNIYILFPPLMNPIIYSV. The Cytoplasmic portion of the chain corresponds to 304–321; the sequence is KTQQIHTRMLRLFSLKRY.

Belongs to the G-protein coupled receptor 1 family.

Its subcellular location is the cell membrane. Functionally, odorant receptor. This is Olfactory receptor 51V1 (OR51V1) from Homo sapiens (Human).